Reading from the N-terminus, the 309-residue chain is Glutaminase (309 aa).

7 residues coordinate substrate: Ser-64, Asn-114, Glu-160, Asn-167, Tyr-191, Tyr-243, and Val-261.

The protein belongs to the glutaminase family. As to quaternary structure, homotetramer.

The enzyme catalyses L-glutamine + H2O = L-glutamate + NH4(+). The sequence is that of Glutaminase from Azorhizobium caulinodans (strain ATCC 43989 / DSM 5975 / JCM 20966 / LMG 6465 / NBRC 14845 / NCIMB 13405 / ORS 571).